Here is a 316-residue protein sequence, read N- to C-terminus: MTAADWRRTLNPQEQREVRELVGAATEFDAVAPVGEQVLRELGHDRTEHLLIRGSVSGGAADAVVGYLNLTPPRDAQPQMAELVVHPRARRRGIGSALARAALAKTGAANRFWAHGTLEPARATAAALGLSPVRELMQMRRSLRDLPDSVPAVPGVRIRTYAGPADDAELLRVNNAAFAYHPEQGGWTDVELAERRAEPWFDPAGLFLAFGDDDSDRPGRLLGFHWTKVHLDQPGLGEVYVVGVDPCAQGRGLGQALTAVGIEWLARRLGAGDSAADPTVMLYVEADNVAAVRTYQRLGFTTYSVDTAYAVPPAAN.

N-acetyltransferase domains are found at residues 16 to 153 (REVR…VPAV) and 156 to 316 (VRIR…PAAN). 1D-myo-inositol 2-(L-cysteinylamino)-2-deoxy-alpha-D-glucopyranoside is bound at residue Glu36. Residues 83 to 85 (LVV) and 91 to 96 (RRGIGS) each bind acetyl-CoA. 1D-myo-inositol 2-(L-cysteinylamino)-2-deoxy-alpha-D-glucopyranoside is bound by residues Glu183, Lys228, and Glu238. Residues 242–244 (VGV) and 249–255 (QGRGLGQ) contribute to the acetyl-CoA site. Tyr283 contacts 1D-myo-inositol 2-(L-cysteinylamino)-2-deoxy-alpha-D-glucopyranoside. Residue 288-293 (NVAAVR) coordinates acetyl-CoA.

The protein belongs to the acetyltransferase family. MshD subfamily. Monomer.

It catalyses the reaction 1D-myo-inositol 2-(L-cysteinylamino)-2-deoxy-alpha-D-glucopyranoside + acetyl-CoA = mycothiol + CoA + H(+). Its function is as follows. Catalyzes the transfer of acetyl from acetyl-CoA to desacetylmycothiol (Cys-GlcN-Ins) to form mycothiol. This chain is Mycothiol acetyltransferase, found in Mycolicibacterium paratuberculosis (strain ATCC BAA-968 / K-10) (Mycobacterium paratuberculosis).